The chain runs to 180 residues: Oligoribonuclease (180 aa).

The Exonuclease domain occupies 7–170 (LIWIDLEMTG…DDIRESIAEL (164 aa)). Residue Tyr128 is part of the active site.

The protein belongs to the oligoribonuclease family.

It is found in the cytoplasm. 3'-to-5' exoribonuclease specific for small oligoribonucleotides. The chain is Oligoribonuclease from Ectopseudomonas mendocina (strain ymp) (Pseudomonas mendocina).